The primary structure comprises 144 residues: Phosphomevalonate dehydratase small subunit (144 aa).

Ser-65 (proton acceptor) is an active-site residue.

It belongs to the AcnX type II small subunit family. Heterodimer composed of a large subunit (PMDh-L) and a small subunit (PMDh-S).

The catalysed reaction is (R)-5-phosphomevalonate = (2E)-3-methyl-5-phosphooxypent-2-enoate + H2O. Its pathway is isoprenoid biosynthesis; isopentenyl diphosphate biosynthesis via mevalonate pathway. Component of a hydro-lyase that catalyzes the dehydration of mevalonate 5-phosphate (MVA5P) to form trans-anhydromevalonate 5-phosphate (tAHMP). Involved in the archaeal mevalonate (MVA) pathway, which provides fundamental precursors for isoprenoid biosynthesis, such as isopentenyl diphosphate (IPP) and dimethylallyl diphosphate (DMAPP). The chain is Phosphomevalonate dehydratase small subunit from Methanosarcina mazei (strain ATCC BAA-159 / DSM 3647 / Goe1 / Go1 / JCM 11833 / OCM 88) (Methanosarcina frisia).